The sequence spans 282 residues: NH(3)-dependent NAD(+) synthetase (282 aa).

Gly-51–Ser-58 contributes to the ATP binding site. Asp-57 provides a ligand contact to Mg(2+). Position 148 (Arg-148) interacts with deamido-NAD(+). Position 168 (Thr-168) interacts with ATP. Glu-173 is a binding site for Mg(2+). Deamido-NAD(+) contacts are provided by Lys-181 and Asp-188. Lys-197 and Thr-219 together coordinate ATP. His-268–Lys-269 is a deamido-NAD(+) binding site.

This sequence belongs to the NAD synthetase family. As to quaternary structure, homodimer.

It carries out the reaction deamido-NAD(+) + NH4(+) + ATP = AMP + diphosphate + NAD(+) + H(+). It participates in cofactor biosynthesis; NAD(+) biosynthesis; NAD(+) from deamido-NAD(+) (ammonia route): step 1/1. In terms of biological role, catalyzes the ATP-dependent amidation of deamido-NAD to form NAD. Uses ammonia as a nitrogen source. In Burkholderia cenocepacia (strain ATCC BAA-245 / DSM 16553 / LMG 16656 / NCTC 13227 / J2315 / CF5610) (Burkholderia cepacia (strain J2315)), this protein is NH(3)-dependent NAD(+) synthetase.